The chain runs to 103 residues: Co-chaperonin GroES (103 aa).

This sequence belongs to the GroES chaperonin family. As to quaternary structure, heptamer of 7 subunits arranged in a ring. Interacts with the chaperonin GroEL.

The protein localises to the cytoplasm. Functionally, together with the chaperonin GroEL, plays an essential role in assisting protein folding. The GroEL-GroES system forms a nano-cage that allows encapsulation of the non-native substrate proteins and provides a physical environment optimized to promote and accelerate protein folding. GroES binds to the apical surface of the GroEL ring, thereby capping the opening of the GroEL channel. This Nostoc sp. (strain PCC 7120 / SAG 25.82 / UTEX 2576) protein is Co-chaperonin GroES.